Consider the following 545-residue polypeptide: T-complex protein 1 subunit gamma (545 aa).

N-acetylmethionine is present on M1. The tract at residues 1 to 24 is disordered; the sequence is MMGHRPVLVLSQNTKRESGRKVQS. S11 is modified (phosphoserine). Residue K15 forms a Glycyl lysine isopeptide (Lys-Gly) (interchain with G-Cter in SUMO2) linkage. G42 is a binding site for ADP. G42 serves as a coordination point for ATP. D93 provides a ligand contact to Mg(2+). Residues G94, T95, T96, S97, T162, and K163 each contribute to the ADP site. Residues G94, T95, and T96 each contribute to the ATP site. S170 bears the Phosphoserine mark. An N6-acetyllysine modification is found at K222. S243 and S244 each carry phosphoserine. Phosphotyrosine is present on Y247. Residues K248 and K249 each participate in a glycyl lysine isopeptide (Lys-Gly) (interchain with G-Cter in SUMO2) cross-link. S252 is subject to Phosphoserine. Residues C366 and C372 are joined by a disulfide bond. K381 is covalently cross-linked (Glycyl lysine isopeptide (Lys-Gly) (interchain with G-Cter in SUMO2)). Residue G411 participates in ADP binding. Residue G411 coordinates ATP. Phosphothreonine is present on residues T430 and T459. ADP-binding residues include G482, E483, E497, and K502. G482 contacts ATP. E497 serves as a coordination point for ATP. The tract at residues 526–545 is disordered; the sequence is HKKKGDDQNRQTGAPDAGQE.

It belongs to the TCP-1 chaperonin family. In terms of assembly, component of the chaperonin-containing T-complex (TRiC), a hexadecamer composed of two identical back-to-back stacked rings enclosing a protein folding chamber. Each ring is made up of eight different subunits: TCP1/CCT1, CCT2, CCT3, CCT4, CCT5, CCT6A/CCT6, CCT7, CCT8. Interacts with PACRG. Interacts with DNAAF4. Interacts with DLEC1. In terms of processing, the N-terminus is blocked.

Its subcellular location is the cytoplasm. The enzyme catalyses ATP + H2O = ADP + phosphate + H(+). Functionally, component of the chaperonin-containing T-complex (TRiC), a molecular chaperone complex that assists the folding of actin, tubulin and other proteins upon ATP hydrolysis. The TRiC complex mediates the folding of WRAP53/TCAB1, thereby regulating telomere maintenance. As part of the TRiC complex may play a role in the assembly of BBSome, a complex involved in ciliogenesis regulating transports vesicles to the cilia. This chain is T-complex protein 1 subunit gamma (Cct3), found in Mus musculus (Mouse).